The chain runs to 63 residues: MPKMKSVKGAVKRFKVKKSGKIKRGTAYRSHILTKVDGKHHRQMRSSKHVDTVDAKNIKEMIN.

This sequence belongs to the bacterial ribosomal protein bL35 family.

The chain is Large ribosomal subunit protein bL35 from Sulfurovum sp. (strain NBC37-1).